Reading from the N-terminus, the 322-residue chain is Ferredoxin--NADP reductase (322 aa).

FAD is bound by residues Asp33, Gln41, Tyr46, Ala86, Phe120, Asp278, and Ser319.

It belongs to the ferredoxin--NADP reductase type 2 family. As to quaternary structure, homodimer. The cofactor is FAD.

It catalyses the reaction 2 reduced [2Fe-2S]-[ferredoxin] + NADP(+) + H(+) = 2 oxidized [2Fe-2S]-[ferredoxin] + NADPH. The polypeptide is Ferredoxin--NADP reductase (Salinispora tropica (strain ATCC BAA-916 / DSM 44818 / JCM 13857 / NBRC 105044 / CNB-440)).